The chain runs to 381 residues: Dual-specificity RNA methyltransferase RlmN (381 aa).

Catalysis depends on E96, which acts as the Proton acceptor. The region spanning 102-342 is the Radical SAM core domain; the sequence is TDDRGTLCVS…TRTTRGDDID (241 aa). A disulfide bridge links C109 with C345. Positions 116, 120, and 123 each coordinate [4Fe-4S] cluster. Residues 170 to 171, S202, 224 to 226, and N302 contribute to the S-adenosyl-L-methionine site; these read GE and SLH. C345 acts as the S-methylcysteine intermediate in catalysis.

The protein belongs to the radical SAM superfamily. RlmN family. The cofactor is [4Fe-4S] cluster.

It is found in the cytoplasm. It catalyses the reaction adenosine(2503) in 23S rRNA + 2 reduced [2Fe-2S]-[ferredoxin] + 2 S-adenosyl-L-methionine = 2-methyladenosine(2503) in 23S rRNA + 5'-deoxyadenosine + L-methionine + 2 oxidized [2Fe-2S]-[ferredoxin] + S-adenosyl-L-homocysteine. It carries out the reaction adenosine(37) in tRNA + 2 reduced [2Fe-2S]-[ferredoxin] + 2 S-adenosyl-L-methionine = 2-methyladenosine(37) in tRNA + 5'-deoxyadenosine + L-methionine + 2 oxidized [2Fe-2S]-[ferredoxin] + S-adenosyl-L-homocysteine. Specifically methylates position 2 of adenine 2503 in 23S rRNA and position 2 of adenine 37 in tRNAs. m2A2503 modification seems to play a crucial role in the proofreading step occurring at the peptidyl transferase center and thus would serve to optimize ribosomal fidelity. The chain is Dual-specificity RNA methyltransferase RlmN from Pseudomonas putida (strain W619).